A 96-amino-acid polypeptide reads, in one-letter code: Ribonuclease P protein component 1 (96 aa).

The protein belongs to the eukaryotic/archaeal RNase P protein component 1 family. As to quaternary structure, consists of a catalytic RNA component and at least 4-5 protein subunits.

It is found in the cytoplasm. It catalyses the reaction Endonucleolytic cleavage of RNA, removing 5'-extranucleotides from tRNA precursor.. Functionally, part of ribonuclease P, a protein complex that generates mature tRNA molecules by cleaving their 5'-ends. The chain is Ribonuclease P protein component 1 from Methanococcus aeolicus (strain ATCC BAA-1280 / DSM 17508 / OCM 812 / Nankai-3).